Reading from the N-terminus, the 479-residue chain is Beta-monoglucosyldiacylglycerol synthase (479 aa).

Transmembrane regions (helical) follow at residues 48-68, 363-383, 389-409, and 428-448; these read AAVM…WVWG, FLLM…MALW, LLTP…YYGL, and LART…MPAV.

Belongs to the glycosyltransferase 2 family. Mg(2+) serves as cofactor.

It is found in the membrane. The catalysed reaction is a 1,2-diacyl-sn-glycerol + UDP-alpha-D-glucose = a 1,2-diacyl-3-O-(beta-D-glucopyranosyl)-sn-glycerol + UDP + H(+). Its function is as follows. Glucosyltransferase involved in the biosynthesis of the non-bilayer-forming membrane lipid beta-monoglucosyldiacylglycerol which contributes to regulate the properties and stability of the membrane. Catalyzes the transfer of a glucosyl residue from UDP-Glc to diacylglycerol (DAG) acceptor to form the corresponding beta-glucosyl-DAG (1,2-diacyl-3-O-(beta-D-glucopyranosyl)-sn-glycerol). It can only use UDP-Glc as sugar donor. Two types of DAG (dipalmitoyl-DAG (DPDAG) and 1-oleoyl-2-palmitoyl-DAG (OPDAG)) can be used as sugar acceptors, but OPDAG is preferred. This is Beta-monoglucosyldiacylglycerol synthase from Synechocystis sp. (strain ATCC 27184 / PCC 6803 / Kazusa).